Reading from the N-terminus, the 180-residue chain is Inner membrane assembly complex subunit 17 (180 aa).

The transit peptide at 1 to 36 (MMIRNQLYRKCIIGGGRSILNGWVINGTVPNIGLRY) directs the protein to the mitochondrion. At 37–105 (LRSGIVTRSN…RKTQDIPIKR (69 aa)) the chain is on the mitochondrial matrix side. A helical membrane pass occupies residues 106 to 128 (FIRPTWMFLLMSSTFYLLGHYIW). Positions 129–163 (WKLEYDEVEKELDRQVTALEEELHNLIEEHRVHGE) form a coiled coil. At 129–180 (WKLEYDEVEKELDRQVTALEEELHNLIEEHRVHGENEAIKNKKHKHWYKFWS) the chain is on the mitochondrial intermembrane side.

Belongs to the INA17 family. As to quaternary structure, component of the inner membrane assembly (INA) complex, composed of INA17 and INA22. Interacts with a subset of F(1)F(0)-ATP synthase subunits of the F(1)-domain and the peripheral stalk.

Its subcellular location is the mitochondrion inner membrane. In terms of biological role, component of the INA complex (INAC) that promotes the biogenesis of mitochondrial F(1)F(0)-ATP synthase. INAC facilitates the assembly of the peripheral stalk and promotes the assembly of the catalytic F(1)-domain with the membrane-embedded F(0)-domain. This Vanderwaltozyma polyspora (strain ATCC 22028 / DSM 70294 / BCRC 21397 / CBS 2163 / NBRC 10782 / NRRL Y-8283 / UCD 57-17) (Kluyveromyces polysporus) protein is Inner membrane assembly complex subunit 17.